Consider the following 463-residue polypeptide: Mitochondrial dynamics protein MID51 (463 aa).

The Mitochondrial intermembrane segment spans residues M1–V23. A helical transmembrane segment spans residues L24 to V46. Over K47–T463 the chain is Cytoplasmic. The tract at residues M49–Q195 is dimerization. Phosphoserine is present on residues S55, S59, S79, and S94. The disordered stretch occupies residues P57–M77. An important for interaction with DNM1L region spans residues A160 to R169. Positions 187, 189, and 201 each coordinate ADP. The interval R234–R243 is important for interaction with DNM1L. S340, R342, and K368 together coordinate ADP.

The protein belongs to the MID49/MID51 family. Homodimer. Interacts with DNM1L.

The protein localises to the mitochondrion outer membrane. In terms of biological role, mitochondrial outer membrane protein which regulates mitochondrial fission/fusion dynamics. Promotes the recruitment and association of the fission mediator dynamin-related protein 1 (DNM1L) to the mitochondrial surface independently of the mitochondrial fission FIS1 and MFF proteins. Regulates DNM1L GTPase activity and DNM1L oligomerization. Binds ADP and can also bind GDP, although with lower affinity. Does not bind CDP, UDP, ATP, AMP or GTP. Inhibits DNM1L GTPase activity in the absence of bound ADP. Requires ADP to stimulate DNM1L GTPase activity and the assembly of DNM1L into long, oligomeric tubules with a spiral pattern, as opposed to the ring-like DNM1L oligomers observed in the absence of bound ADP. Does not require ADP for its function in recruiting DNM1L. The protein is Mitochondrial dynamics protein MID51 (Mief1) of Mus musculus (Mouse).